Reading from the N-terminus, the 69-residue chain is Cold shock-like protein CspC (69 aa).

Positions Gly-6 to Val-66 constitute a CSD domain.

The protein resides in the cytoplasm. This is Cold shock-like protein CspC (cspC) from Escherichia coli O157:H7.